A 479-amino-acid polypeptide reads, in one-letter code: RAC-gamma serine/threonine-protein kinase (479 aa).

S2 carries the post-translational modification N-acetylserine. The PH domain occupies 5 to 107 (TIVKEGWVQK…WTEAIQAVAD (103 aa)). Residues C59 and C76 are joined by a disulfide bond. Residues 148 to 405 (FDYLKLLGKG…AKEIMRHSFF (258 aa)) form the Protein kinase domain. ATP contacts are provided by residues 154 to 162 (LGKGTFGKV) and K177. The active-site Proton acceptor is D271. A disulfide bridge connects residues C293 and C307. T302 is a glycosylation site (O-linked (GlcNAc) threonine). T305 carries the post-translational modification Phosphothreonine; by PDPK1. The O-linked (GlcNAc) threonine glycan is linked to T309. Residues 406–479 (SGVNWQDVYD…QFSYSASGRE (74 aa)) form the AGC-kinase C-terminal domain. The tract at residues 445–479 (TITPPEKYDDDGMDGMDNERRPHFPQFSYSASGRE) is disordered. At T447 the chain carries Phosphothreonine. S472 carries the phosphoserine; by PKC/PRKCZ modification. O-linked (GlcNAc) serine; alternate glycosylation is present at S472.

This sequence belongs to the protein kinase superfamily. AGC Ser/Thr protein kinase family. RAC subfamily. As to quaternary structure, interacts (via PH domain) with TCL1A; this enhances AKT3 phosphorylation and activation. Interacts with TRAF6. Interacts with KCTD20. Interacts with BTBD10. In terms of processing, phosphorylation on Thr-305 and Ser-472 is required for full activity. Phosphorylation of the activation loop at Thr-305 by PDPK1/PDK1 is a prerequisite for full activation. Phosphorylation at Ser-472 by mTORC2 in response to growth factors plays a key role in AKT1 activation by facilitating subsequent phosphorylation of the activation loop by PDPK1/PDK1. Ubiquitinated. When fully phosphorylated and translocated into the nucleus, undergoes 'Lys-48'-polyubiquitination catalyzed by TTC3, leading to its degradation by the proteasome. Post-translationally, O-GlcNAcylation at Thr-302 and Thr-309 inhibits activating phosphorylation at Thr-305 via disrupting the interaction between AKT and PDPK1/PDK1. In terms of tissue distribution, isoform 1 is expressed in prostate, testis, uterus and mammary gland and isoform 2 is expressed in prostate, testis and mammary gland.

It localises to the nucleus. It is found in the cytoplasm. Its subcellular location is the membrane. The enzyme catalyses L-seryl-[protein] + ATP = O-phospho-L-seryl-[protein] + ADP + H(+). It carries out the reaction L-threonyl-[protein] + ATP = O-phospho-L-threonyl-[protein] + ADP + H(+). Two specific sites, one in the kinase domain (Thr-305) and the other in the C-terminal regulatory region (Ser-472), need to be phosphorylated for its full activation. IGF-1 leads to the activation of AKT3, which may play a role in regulating cell survival. Functionally, AKT3 is one of 3 closely related serine/threonine-protein kinases (AKT1, AKT2 and AKT3) called the AKT kinase, and which regulate many processes including metabolism, proliferation, cell survival, growth and angiogenesis. This is mediated through serine and/or threonine phosphorylation of a range of downstream substrates. Over 100 substrate candidates have been reported so far, but for most of them, no isoform specificity has been reported. AKT3 is the least studied AKT isoform. It plays an important role in brain development and is crucial for the viability of malignant glioma cells. AKT3 isoform may also be the key molecule in up-regulation and down-regulation of MMP13 via IL13. Required for the coordination of mitochondrial biogenesis with growth factor-induced increases in cellular energy demands. Down-regulation by RNA interference reduces the expression of the phosphorylated form of BAD, resulting in the induction of caspase-dependent apoptosis. In Mus musculus (Mouse), this protein is RAC-gamma serine/threonine-protein kinase (Akt3).